A 277-amino-acid polypeptide reads, in one-letter code: Large ribosomal subunit protein uL2 (277 aa).

Disordered regions lie at residues 32–58 and 225–277; these read KSLT…RGGG and VAMN…RRNK. Residues 258–277 are compositionally biased toward basic residues; the sequence is YKTRKKKRYSDKFIIKRRNK.

The protein belongs to the universal ribosomal protein uL2 family. In terms of assembly, part of the 50S ribosomal subunit. Forms a bridge to the 30S subunit in the 70S ribosome.

One of the primary rRNA binding proteins. Required for association of the 30S and 50S subunits to form the 70S ribosome, for tRNA binding and peptide bond formation. It has been suggested to have peptidyltransferase activity; this is somewhat controversial. Makes several contacts with the 16S rRNA in the 70S ribosome. The sequence is that of Large ribosomal subunit protein uL2 from Borreliella afzelii (strain PKo) (Borrelia afzelii).